A 475-amino-acid polypeptide reads, in one-letter code: Ankyrin repeat, SAM and basic leucine zipper domain-containing protein 1 (475 aa).

Positions 1 to 25 (MAAGPLRGLAVAGGGESSDSEDDGW) are disordered. 3 positions are modified to phosphoserine: S17, S18, and S20. ANK repeat units follow at residues 45–74 (ERQE…SVDT), 78–107 (YGWT…NASF), 110–144 (DKQT…DPNV), 148–177 (RLMT…EVNT), 181–210 (NGYT…NKMI), and 214–243 (DGKT…PLEG). The SAM domain occupies 272–334 (SYTAFGDLEI…KIMAALKELE (63 aa)).

In terms of assembly, interacts with DDX4, PIWIL1, RANBP9 and TDRD1.

The protein resides in the cytoplasm. Plays a central role during spermatogenesis by repressing transposable elements and preventing their mobilization, which is essential for the germline integrity. Acts via the piRNA metabolic process, which mediates the repression of transposable elements during meiosis by forming complexes composed of piRNAs and Piwi proteins and governs the methylation and subsequent repression of transposons. Its association with pi-bodies suggests a participation in the primary piRNAs metabolic process. Required prior to the pachytene stage to facilitate the production of multiple types of piRNAs, including those associated with repeats involved in the regulation of retrotransposons. May act by mediating protein-protein interactions during germ cell maturation. The protein is Ankyrin repeat, SAM and basic leucine zipper domain-containing protein 1 (ASZ1) of Bos taurus (Bovine).